The following is a 429-amino-acid chain: Saccharopine dehydrogenase-like oxidoreductase (429 aa).

An N-acetylalanine modification is found at Ala-2. At Ser-217 the chain carries Phosphoserine.

Belongs to the saccharopine dehydrogenase family.

The protein is Saccharopine dehydrogenase-like oxidoreductase (SCCPDH) of Bos taurus (Bovine).